We begin with the raw amino-acid sequence, 469 residues long: Transcription factor phomD' (469 aa).

A DNA-binding region (zn(2)-C6 fungal-type) is located at residues C14 to C41. The disordered stretch occupies residues T49–A118. Over residues K82 to M93 the composition is skewed to polar residues. Residues Q104–A118 are compositionally biased toward low complexity.

Its subcellular location is the nucleus. Functionally, transcription factor; part of the gene cluster that mediates the biosynthesis of the phomopsins, a group of hexapeptide mycotoxins which infects lupins and causes lupinosis disease in livestock. May play a role in the regulation of the production of phomopsins. The polypeptide is Transcription factor phomD' (Diaporthe leptostromiformis (Lupinosis disease fungus)).